The primary structure comprises 105 residues: Flagellar transcriptional regulator FlhD (105 aa).

Belongs to the FlhD family. As to quaternary structure, homodimer; disulfide-linked. Forms a heterohexamer composed of two FlhC and four FlhD subunits. Each FlhC binds a FlhD dimer, forming a heterotrimer, and a hexamer assembles by dimerization of two heterotrimers.

It is found in the cytoplasm. In terms of biological role, functions in complex with FlhC as a master transcriptional regulator that regulates transcription of several flagellar and non-flagellar operons by binding to their promoter region. Activates expression of class 2 flagellar genes, including fliA, which is a flagellum-specific sigma factor that turns on the class 3 genes. Also regulates genes whose products function in a variety of physiological pathways. The polypeptide is Flagellar transcriptional regulator FlhD (Ralstonia nicotianae (strain ATCC BAA-1114 / GMI1000) (Ralstonia solanacearum)).